We begin with the raw amino-acid sequence, 266 residues long: Indole-3-glycerol phosphate synthase (266 aa).

It belongs to the TrpC family.

The enzyme catalyses 1-(2-carboxyphenylamino)-1-deoxy-D-ribulose 5-phosphate + H(+) = (1S,2R)-1-C-(indol-3-yl)glycerol 3-phosphate + CO2 + H2O. Its pathway is amino-acid biosynthesis; L-tryptophan biosynthesis; L-tryptophan from chorismate: step 4/5. The polypeptide is Indole-3-glycerol phosphate synthase (Paracidovorax citrulli (strain AAC00-1) (Acidovorax citrulli)).